Reading from the N-terminus, the 105-residue chain is Cuticle protein AMP1B (105 aa).

The disordered stretch occupies residues D1–Y21. The Chitin-binding type R&amp;R domain occupies D16 to P81.

In terms of tissue distribution, arthrodial membrane.

The chain is Cuticle protein AMP1B from Homarus americanus (American lobster).